Reading from the N-terminus, the 203-residue chain is TATA-binding protein 2 (203 aa).

2 tandem repeats follow at residues 28 to 104 (LQNI…ARII) and 118 to 195 (IQNI…YPVL).

This sequence belongs to the TBP family. As to quaternary structure, belongs to the TFIID complex together with the TBP-associated factors (TAFs). Binds DNA as monomer. Interacts with RF2A and TFIIB. Interacts with CWZF7.

It is found in the nucleus. General transcription factor that functions at the core of the DNA-binding multiprotein factor TFIID. Binding of TFIID to the TATA box is the initial transcriptional step of the pre-initiation complex (PIC), playing a role in the activation of eukaryotic genes transcribed by RNA polymerase II. This is TATA-binding protein 2 (TBP2) from Oryza sativa subsp. japonica (Rice).